The following is a 297-amino-acid chain: HTH-type transcriptional regulator ArgP (297 aa).

The HTH lysR-type domain maps to 4-60 (PDYRTLQALDAVIRERGFERAAQKLCITQSAVSQRIKQLENMFGQPLLVRTVPPRPT). Positions 21-40 (FERAAQKLCITQSAVSQRIK) form a DNA-binding region, H-T-H motif.

This sequence belongs to the LysR transcriptional regulatory family. In terms of assembly, homodimer.

Functionally, controls the transcription of genes involved in arginine and lysine metabolism. The sequence is that of HTH-type transcriptional regulator ArgP from Salmonella typhi.